A 200-amino-acid chain; its full sequence is Trem-like transcript 4 protein (200 aa).

The signal sequence occupies residues 1-25 (MAWGGVHTCCFHLCCCCSWPQGAVP). The region spanning 26-126 (EELHKHPGQT…NIITVLRNIS (101 aa)) is the Ig-like V-type domain. A disulfide bridge connects residues cysteine 40 and cysteine 109. N-linked (GlcNAc...) asparagine glycosylation is present at asparagine 93.

It is found in the secreted. In terms of biological role, positively regulates Toll-like receptor TLR7 signaling in macrophages. The polypeptide is Trem-like transcript 4 protein (TREML4) (Homo sapiens (Human)).